We begin with the raw amino-acid sequence, 303 residues long: uncharacterized protein (303 aa).

This is an uncharacterized protein from Haemophilus influenzae (strain ATCC 51907 / DSM 11121 / KW20 / Rd).